The chain runs to 441 residues: Probable membrane metalloprotease ARASP2, chloroplastic (441 aa).

A chloroplast-targeting transit peptide spans 1-84; sequence MLLNISSSPI…DFGSLESVLE (84 aa). H96 contacts Zn(2+). The active site involves E97. H100 contributes to the Zn(2+) binding site. The chain crosses the membrane as a helical span at residues 171–191; sequence VIVVSAGIVANVIFAYAIIFT. Residues 196-249 form the PDZ domain; sequence VGLPVQESFPGVLVPDVKSFSAASRDGLLPGDVILAVDGTELSNSGSDSVSKVV. A run of 2 helical transmembrane segments spans residues 373–393 and 407–427; these read LAVI…ALIL and VEQG…LFLI.

Belongs to the peptidase M50A family. Zn(2+) is required as a cofactor.

It is found in the plastid. The protein localises to the chloroplast inner membrane. Functionally, metalloprotease essential for chloroplast and plant development. May be involved in regulated intramembrane proteolysis (RIP). The polypeptide is Probable membrane metalloprotease ARASP2, chloroplastic (Arabidopsis thaliana (Mouse-ear cress)).